The following is a 289-amino-acid chain: tRNA pseudouridine synthase B (289 aa).

The active-site Nucleophile is Asp55. The tract at residues 243-289 is disordered; the sequence is PGGVLAQHEREGSRALDSAAGNAEHDREEARIADNNREDRSRQHADR. A compositionally biased stretch (basic and acidic residues) spans 265–289; sequence AEHDREEARIADNNREDRSRQHADR.

This sequence belongs to the pseudouridine synthase TruB family. Type 1 subfamily.

It catalyses the reaction uridine(55) in tRNA = pseudouridine(55) in tRNA. In terms of biological role, responsible for synthesis of pseudouridine from uracil-55 in the psi GC loop of transfer RNAs. The chain is tRNA pseudouridine synthase B from Chlorobium luteolum (strain DSM 273 / BCRC 81028 / 2530) (Pelodictyon luteolum).